Reading from the N-terminus, the 521-residue chain is Probable glycogen synthase (521 aa).

It belongs to the glycosyltransferase 1 family. Bacterial/plant glycogen synthase subfamily.

It carries out the reaction [(1-&gt;4)-alpha-D-glucosyl](n) + ADP-alpha-D-glucose = [(1-&gt;4)-alpha-D-glucosyl](n+1) + ADP + H(+). Its pathway is glycan biosynthesis; glycogen biosynthesis. Its function is as follows. Synthesizes alpha-1,4-glucan chains using ADP-glucose. This is Probable glycogen synthase (glgA) from Methanocaldococcus jannaschii (strain ATCC 43067 / DSM 2661 / JAL-1 / JCM 10045 / NBRC 100440) (Methanococcus jannaschii).